We begin with the raw amino-acid sequence, 494 residues long: UPF0371 protein SUB1165 (494 aa).

The protein belongs to the UPF0371 family.

The sequence is that of UPF0371 protein SUB1165 from Streptococcus uberis (strain ATCC BAA-854 / 0140J).